A 135-amino-acid chain; its full sequence is Large ribosomal subunit protein uL15 (135 aa).

Residues 21 to 66 (VGRGQGSGMGKTATRGGKGQTARTGYKAKRGFEGGQQPLQRRLPKI) form a disordered region.

The protein belongs to the universal ribosomal protein uL15 family. In terms of assembly, part of the 50S ribosomal subunit.

Functionally, binds to the 23S rRNA. This Helicobacter pylori (strain HPAG1) protein is Large ribosomal subunit protein uL15.